Reading from the N-terminus, the 304-residue chain is Ornithine carbamoyltransferase (304 aa).

Carbamoyl phosphate is bound by residues 53–56, Gln-80, Arg-104, and 131–134; these read STRT and HPCQ. L-ornithine-binding positions include Asn-162, Asp-219, and 223 to 224; that span reads SM. Residues 259 to 260 and Arg-287 each bind carbamoyl phosphate; that span reads CL.

It belongs to the aspartate/ornithine carbamoyltransferase superfamily. OTCase family.

Its subcellular location is the cytoplasm. It catalyses the reaction carbamoyl phosphate + L-ornithine = L-citrulline + phosphate + H(+). Its pathway is amino-acid biosynthesis; L-arginine biosynthesis; L-arginine from L-ornithine and carbamoyl phosphate: step 1/3. Reversibly catalyzes the transfer of the carbamoyl group from carbamoyl phosphate (CP) to the N(epsilon) atom of ornithine (ORN) to produce L-citrulline. The polypeptide is Ornithine carbamoyltransferase (Nitrosococcus oceani (strain ATCC 19707 / BCRC 17464 / JCM 30415 / NCIMB 11848 / C-107)).